Reading from the N-terminus, the 404-residue chain is Methionine aminopeptidase 1D, mitochondrial (404 aa).

Residues 1-58 constitute a mitochondrion transit peptide; sequence MNKILKNIINKSSINNVFKTSFNGGISSSSSSSSSYLNNNNNIIKSYNVQQKQQQRYY. Residues 86-109 form a disordered region; that stretch reads VRSQRLTKKTASPLEGMNRKERRK. Histidine 232 contacts substrate. A divalent metal cation-binding residues include aspartate 249, aspartate 260, and histidine 323. Substrate is bound at residue histidine 330. A divalent metal cation-binding residues include glutamate 355 and glutamate 389.

This sequence belongs to the peptidase M24A family. Methionine aminopeptidase type 1 subfamily. Requires Co(2+) as cofactor. Zn(2+) serves as cofactor. It depends on Mn(2+) as a cofactor. Fe(2+) is required as a cofactor.

The protein resides in the mitochondrion. The catalysed reaction is Release of N-terminal amino acids, preferentially methionine, from peptides and arylamides.. Its function is as follows. Removes the N-terminal methionine from nascent proteins. The N-terminal methionine is often cleaved when the second residue in the primary sequence is small and uncharged (Met-Ala-, Cys, Gly, Pro, Ser, Thr, or Val). The protein is Methionine aminopeptidase 1D, mitochondrial (metap1d) of Dictyostelium discoideum (Social amoeba).